The chain runs to 305 residues: GMP synthase [glutamine-hydrolyzing] subunit B (305 aa).

In terms of domain architecture, GMPS ATP-PPase spans 2–184 (VKPEKFIPKA…LKLPDEICER (183 aa)). Position 29–35 (29–35 (SGGVDSS)) interacts with ATP.

As to quaternary structure, heterodimer composed of a glutamine amidotransferase subunit (A) and a GMP-binding subunit (B).

It carries out the reaction XMP + L-glutamine + ATP + H2O = GMP + L-glutamate + AMP + diphosphate + 2 H(+). It participates in purine metabolism; GMP biosynthesis; GMP from XMP (L-Gln route): step 1/1. Functionally, catalyzes the synthesis of GMP from XMP. This is GMP synthase [glutamine-hydrolyzing] subunit B from Methanosarcina barkeri (strain Fusaro / DSM 804).